The following is a 341-amino-acid chain: Phosphate acyltransferase (341 aa).

This sequence belongs to the PlsX family. In terms of assembly, homodimer. Probably interacts with PlsY.

The protein resides in the cytoplasm. The enzyme catalyses a fatty acyl-[ACP] + phosphate = an acyl phosphate + holo-[ACP]. The protein operates within lipid metabolism; phospholipid metabolism. Functionally, catalyzes the reversible formation of acyl-phosphate (acyl-PO(4)) from acyl-[acyl-carrier-protein] (acyl-ACP). This enzyme utilizes acyl-ACP as fatty acyl donor, but not acyl-CoA. The sequence is that of Phosphate acyltransferase from Pseudoalteromonas atlantica (strain T6c / ATCC BAA-1087).